Consider the following 478-residue polypeptide: Transcript termination protein A18 (478 aa).

The region spanning 98–254 (KLSTHRPMYM…NDVVNVLKVS (157 aa)) is the Helicase ATP-binding domain. Residue 111–118 (LSCGFGKT) coordinates ATP. The DESH box motif lies at 204 to 207 (DESH). The Helicase C-terminal domain occupies 302–454 (PRNNLIVDTV…IVSVSTDKLG (153 aa)). Residues 456–478 (QQEGKEGTKEEPALTKAFSSQIR) form a disordered region. Residues 458–468 (EGKEGTKEEPA) show a composition bias toward basic and acidic residues.

Belongs to the helicase family. Poxviruses subfamily. As to quaternary structure, interacts with G2. Might be part of a transcription complex composed at least of G2, A18, and H5.

The protein resides in the virion. In terms of biological role, DNA helicase which seems to act as a postreplicative transcription termination factor. Involved in ATP-dependent release of nascent RNA. Forms a stable complex with single-stranded DNA, and to a lesser extent RNA. In Oryctolagus cuniculus (Rabbit), this protein is Transcript termination protein A18.